The chain runs to 467 residues: UDP-N-acetylmuramate--L-alanine ligase (467 aa).

Residue 114 to 120 (GTHGKTT) coordinates ATP.

The protein belongs to the MurCDEF family.

Its subcellular location is the cytoplasm. It catalyses the reaction UDP-N-acetyl-alpha-D-muramate + L-alanine + ATP = UDP-N-acetyl-alpha-D-muramoyl-L-alanine + ADP + phosphate + H(+). It participates in cell wall biogenesis; peptidoglycan biosynthesis. In terms of biological role, cell wall formation. This Bradyrhizobium sp. (strain BTAi1 / ATCC BAA-1182) protein is UDP-N-acetylmuramate--L-alanine ligase.